The following is a 335-amino-acid chain: MPQDIDFGLPAPAGISPGLEATRRHNLGWVRRLGLVGDGPSLAWYTSWDMPRLAACGFPHARGAALDLCADAMAFFFVFDDQFDGPLGRDPARAARVCRRLTGIVHGAGPGPGADACSAAFADVWARSTDGAHPGWVARTAHEWEYYFAAQAHEAINRLRGTPGDMESYLQVRRGIAGTDLPLSLGERAAGITVPAAAFHSPQLRIMREAAIDVTLMCNDVYSLEKEEARGDMDNLVLVIEHARRCTRDEAVTAARGEVARRVIRFEQLAREVPALCAQLGLSAVERAHVDTYLGVMEAWMSGYHAWQTQTRRYTGAPHVLPSTGPGYFDEVLPT.

5 residues coordinate Mg(2+): Asp-80, Asp-84, Asn-219, Ser-223, and Glu-227. The DDXXD motif motif lies at 80–84 (DDQFD).

This sequence belongs to the terpene synthase family. It depends on Mg(2+) as a cofactor.

It carries out the reaction (2E,6E)-farnesyl diphosphate + H2O = avermitilol + diphosphate. Functionally, catalyzes the cyclization of farnesyl diphosphate to avermitilol. The polypeptide is Avermitilol synthase (tpc1) (Streptomyces avermitilis (strain ATCC 31267 / DSM 46492 / JCM 5070 / NBRC 14893 / NCIMB 12804 / NRRL 8165 / MA-4680)).